The sequence spans 486 residues: Cysteine--tRNA ligase (486 aa).

A Zn(2+)-binding site is contributed by Cys-30. Residues 32–42 (PTVYDRAHLGN) carry the 'HIGH' region motif. Cys-221, His-246, and Glu-250 together coordinate Zn(2+). The 'KMSKS' region motif lies at 279–283 (KMSKS). Residue Lys-282 coordinates ATP.

This sequence belongs to the class-I aminoacyl-tRNA synthetase family. Monomer. Requires Zn(2+) as cofactor.

The protein localises to the cytoplasm. It carries out the reaction tRNA(Cys) + L-cysteine + ATP = L-cysteinyl-tRNA(Cys) + AMP + diphosphate. This Cereibacter sphaeroides (strain ATCC 17029 / ATH 2.4.9) (Rhodobacter sphaeroides) protein is Cysteine--tRNA ligase.